Consider the following 150-residue polypeptide: MSKTISFKTYSAKPGEVERKWYVVDAEGKVLGRLASEIATILRGKHKPQFTPHVDTGDFVIVTNAGKIGLSGKKLDQKTYFSHSNYPGGVKIENLKDMLRKKPEKVIEKAVWGMLPHNNLGRALFKKLKVYAGPEHPHVSQSPVEMKVNQ.

This sequence belongs to the universal ribosomal protein uL13 family. As to quaternary structure, part of the 50S ribosomal subunit.

Functionally, this protein is one of the early assembly proteins of the 50S ribosomal subunit, although it is not seen to bind rRNA by itself. It is important during the early stages of 50S assembly. In Chlorobium phaeobacteroides (strain BS1), this protein is Large ribosomal subunit protein uL13.